Here is a 104-residue protein sequence, read N- to C-terminus: Large ribosomal subunit protein bL21 (104 aa).

It belongs to the bacterial ribosomal protein bL21 family. In terms of assembly, part of the 50S ribosomal subunit. Contacts protein L20.

In terms of biological role, this protein binds to 23S rRNA in the presence of protein L20. The polypeptide is Large ribosomal subunit protein bL21 (Elusimicrobium minutum (strain Pei191)).